A 78-amino-acid polypeptide reads, in one-letter code: Small integral membrane protein 10-like protein 2A (78 aa).

The protein is Small integral membrane protein 10-like protein 2A of Homo sapiens (Human).